We begin with the raw amino-acid sequence, 390 residues long: Chorismate synthase (390 aa).

The NADP(+) site is built by Arg40 and Arg46. FMN-binding positions include 128 to 130 (RAS), 251 to 252 (QA), Gly296, 311 to 315 (KPIPT), and Arg339.

This sequence belongs to the chorismate synthase family. In terms of assembly, homotetramer. It depends on FMNH2 as a cofactor.

It catalyses the reaction 5-O-(1-carboxyvinyl)-3-phosphoshikimate = chorismate + phosphate. The protein operates within metabolic intermediate biosynthesis; chorismate biosynthesis; chorismate from D-erythrose 4-phosphate and phosphoenolpyruvate: step 7/7. In terms of biological role, catalyzes the anti-1,4-elimination of the C-3 phosphate and the C-6 proR hydrogen from 5-enolpyruvylshikimate-3-phosphate (EPSP) to yield chorismate, which is the branch point compound that serves as the starting substrate for the three terminal pathways of aromatic amino acid biosynthesis. This reaction introduces a second double bond into the aromatic ring system. The sequence is that of Chorismate synthase from Sulfurihydrogenibium sp. (strain YO3AOP1).